A 335-amino-acid chain; its full sequence is Histidinol-phosphate aminotransferase (335 aa).

N6-(pyridoxal phosphate)lysine is present on K202.

The protein belongs to the class-II pyridoxal-phosphate-dependent aminotransferase family. Histidinol-phosphate aminotransferase subfamily. In terms of assembly, homodimer. It depends on pyridoxal 5'-phosphate as a cofactor.

It catalyses the reaction L-histidinol phosphate + 2-oxoglutarate = 3-(imidazol-4-yl)-2-oxopropyl phosphate + L-glutamate. The protein operates within amino-acid biosynthesis; L-histidine biosynthesis; L-histidine from 5-phospho-alpha-D-ribose 1-diphosphate: step 7/9. This chain is Histidinol-phosphate aminotransferase, found in Thermotoga maritima (strain ATCC 43589 / DSM 3109 / JCM 10099 / NBRC 100826 / MSB8).